A 404-amino-acid chain; its full sequence is Ubiquitin-like modifier-activating enzyme 5 (404 aa).

Phosphoserine is present on Ser-45. ATP is bound by residues Gly-83, Asp-104, Lys-127, Asn-150, and Asn-184. Zn(2+) contacts are provided by Cys-226 and Cys-229. The active-site Glycyl thioester intermediate is the Cys-250. Zn(2+)-binding residues include Cys-303 and Cys-308. A UFM1-interacting sequence (UIS) motif is present at residues 334 to 346 (IIHEDNEWGIELV). The segment at 347-377 (SEVSEEELKNFSGPVPDLPEGITVAYTIPKK) is linker. Residues Ser-358 and Ser-393 each carry the phosphoserine modification. The short motif at 389–404 (DSGESLEDLMAKMKNM) is the UFC1-binding sequence (UFC) element.

It belongs to the ubiquitin-activating E1 family. UBA5 subfamily. As to quaternary structure, homodimer; homodimerization is required for UFM1 activation. Interacts (via UIS motif) with UFM1; binds UFM1 via a trans-binding mechanism in which UFM1 interacts with distinct sites in both subunits of the UBA5 homodimer. Interacts (via C-terminus) with UFC1. Interacts (via UIS motif) with GABARAPL2 and, with lower affinity, with GABARAP and GABARAPL1. In terms of tissue distribution, widely expressed.

The protein resides in the cytoplasm. It localises to the nucleus. Its subcellular location is the endoplasmic reticulum membrane. It is found in the golgi apparatus. Its function is as follows. E1-like enzyme which specifically catalyzes the first step in ufmylation. Activates UFM1 by first adenylating its C-terminal glycine residue with ATP, and thereafter linking this residue to the side chain of a cysteine residue in E1, yielding a UFM1-E1 thioester and free AMP. Activates UFM1 via a trans-binding mechanism, in which UFM1 interacts with distinct sites in both subunits of the UBA5 homodimer. Trans-binding also promotes stabilization of the UBA5 homodimer, and enhances ATP-binding. Transfer of UFM1 from UBA5 to the E2-like enzyme UFC1 also takes place using a trans mechanism. Ufmylation plays a key role in various processes, such as ribosome recycling, response to DNA damage, interferon response or reticulophagy (also called ER-phagy). Ufmylation is essential for erythroid differentiation of both megakaryocytes and erythrocytes. In Homo sapiens (Human), this protein is Ubiquitin-like modifier-activating enzyme 5.